The sequence spans 207 residues: MLSKKENLLKLDWIKTNGLIPAIIQDFASNLVLMHGYMNKEAFLKTQKEGFVTFYSRTKKRLWTKGEESGNLLKVIDIVTDCDYDTILIIVEPLGKTCHLNRKSCFFLKENTLNFLSKLEDLIEDRKNFNTDNSYTARLYKSGTKRIAQKVGEEAIETILAAMKNDGDELINESSDLIYHLIVLLHDQNLNFNLIIENLKKRKTEKL.

Residues 1–115 (MLSKKENLLK…FFLKENTLNF (115 aa)) are phosphoribosyl-AMP cyclohydrolase. Residues 116–207 (LSKLEDLIED…NLKKRKTEKL (92 aa)) form a phosphoribosyl-ATP pyrophosphohydrolase region.

This sequence in the N-terminal section; belongs to the PRA-CH family. The protein in the C-terminal section; belongs to the PRA-PH family.

Its subcellular location is the cytoplasm. The enzyme catalyses 1-(5-phospho-beta-D-ribosyl)-ATP + H2O = 1-(5-phospho-beta-D-ribosyl)-5'-AMP + diphosphate + H(+). The catalysed reaction is 1-(5-phospho-beta-D-ribosyl)-5'-AMP + H2O = 1-(5-phospho-beta-D-ribosyl)-5-[(5-phospho-beta-D-ribosylamino)methylideneamino]imidazole-4-carboxamide. It participates in amino-acid biosynthesis; L-histidine biosynthesis; L-histidine from 5-phospho-alpha-D-ribose 1-diphosphate: step 2/9. It functions in the pathway amino-acid biosynthesis; L-histidine biosynthesis; L-histidine from 5-phospho-alpha-D-ribose 1-diphosphate: step 3/9. This Buchnera aphidicola subsp. Schizaphis graminum (strain Sg) protein is Histidine biosynthesis bifunctional protein HisIE (hisI).